We begin with the raw amino-acid sequence, 227 residues long: 2,3-bisphosphoglycerate-dependent phosphoglycerate mutase (227 aa).

Residues Arg8–Asn15, Thr21–Gly22, Arg58, Glu110–Tyr113, Lys121, Arg137–Arg138, and Gly181–Asn182 each bind substrate. Residue His9 is the Tele-phosphohistidine intermediate of the active site. Catalysis depends on Glu110, which acts as the Proton donor/acceptor.

The protein belongs to the phosphoglycerate mutase family. BPG-dependent PGAM subfamily.

It carries out the reaction (2R)-2-phosphoglycerate = (2R)-3-phosphoglycerate. Its pathway is carbohydrate degradation; glycolysis; pyruvate from D-glyceraldehyde 3-phosphate: step 3/5. In terms of biological role, catalyzes the interconversion of 2-phosphoglycerate and 3-phosphoglycerate. This chain is 2,3-bisphosphoglycerate-dependent phosphoglycerate mutase, found in Chlamydia abortus (strain DSM 27085 / S26/3) (Chlamydophila abortus).